A 436-amino-acid chain; its full sequence is 2-aminohexano-6-lactam racemase (436 aa).

Residues 110-111 (GS), Tyr137, and 238-241 (DEVK) each bind pyridoxal 5'-phosphate. Residue Tyr137 is part of the active site. Lys267 carries the post-translational modification N6-(pyridoxal phosphate)lysine. Thr295 is a pyridoxal 5'-phosphate binding site.

The protein belongs to the class-III pyridoxal-phosphate-dependent aminotransferase family. As to quaternary structure, monomer. Requires pyridoxal 5'-phosphate as cofactor.

It catalyses the reaction L-2-aminohexano-6-lactam = D-2-aminohexano-6-lactam. In terms of biological role, catalyzes the interconversion of L-alpha-amino-epsilon-caprolactam and D-alpha-amino-epsilon-caprolactam. The protein is 2-aminohexano-6-lactam racemase of Achromobacter obae.